A 229-amino-acid polypeptide reads, in one-letter code: Uracil-DNA glycosylase (229 aa).

Catalysis depends on D64, which acts as the Proton acceptor.

Belongs to the uracil-DNA glycosylase (UDG) superfamily. UNG family.

The protein resides in the cytoplasm. It catalyses the reaction Hydrolyzes single-stranded DNA or mismatched double-stranded DNA and polynucleotides, releasing free uracil.. Its function is as follows. Excises uracil residues from the DNA which can arise as a result of misincorporation of dUMP residues by DNA polymerase or due to deamination of cytosine. This is Uracil-DNA glycosylase from Klebsiella pneumoniae (strain 342).